The following is an 84-amino-acid chain: Large ribosomal subunit protein bL27 (84 aa).

Residues 1–21 (MAHKKGGGSSKNGRDSQSKRL) form a disordered region.

Belongs to the bacterial ribosomal protein bL27 family.

In Brachyspira hyodysenteriae (strain ATCC 49526 / WA1), this protein is Large ribosomal subunit protein bL27.